The chain runs to 257 residues: Pyridoxine 5'-phosphate synthase (257 aa).

Asn6 provides a ligand contact to 3-amino-2-oxopropyl phosphate. 8 to 9 (DH) is a binding site for 1-deoxy-D-xylulose 5-phosphate. 3-amino-2-oxopropyl phosphate is bound at residue Arg17. His42 serves as the catalytic Proton acceptor. 1-deoxy-D-xylulose 5-phosphate is bound by residues Arg44 and His49. Glu69 acts as the Proton acceptor in catalysis. Thr99 is a 1-deoxy-D-xylulose 5-phosphate binding site. The active-site Proton donor is His211. 3-amino-2-oxopropyl phosphate is bound by residues Gly212 and 233–234 (GQ).

This sequence belongs to the PNP synthase family. As to quaternary structure, homooctamer; tetramer of dimers.

The protein localises to the cytoplasm. The catalysed reaction is 3-amino-2-oxopropyl phosphate + 1-deoxy-D-xylulose 5-phosphate = pyridoxine 5'-phosphate + phosphate + 2 H2O + H(+). It participates in cofactor biosynthesis; pyridoxine 5'-phosphate biosynthesis; pyridoxine 5'-phosphate from D-erythrose 4-phosphate: step 5/5. Functionally, catalyzes the complicated ring closure reaction between the two acyclic compounds 1-deoxy-D-xylulose-5-phosphate (DXP) and 3-amino-2-oxopropyl phosphate (1-amino-acetone-3-phosphate or AAP) to form pyridoxine 5'-phosphate (PNP) and inorganic phosphate. This chain is Pyridoxine 5'-phosphate synthase, found in Campylobacter fetus subsp. fetus (strain 82-40).